Reading from the N-terminus, the 945-residue chain is Cysteine-rich, acidic integral membrane protein (945 aa).

Positions 1 to 20 are disordered; sequence MGNEAGPIFEESNAEVGTPP. The N-terminal stretch at 1–23 is a signal peptide; sequence MGNEAGPIFEESNAEVGTPPADA. Residues 24–882 are Extracellular-facing; that stretch reads VHDDFFFDYK…GKGSSVSAGL (859 aa). N-linked (GlcNAc...) asparagine glycosylation is found at N34 and N43. Tandem repeats lie at residues 40–51, 52–63, 64–75, 76–87, 88–99, 100–111, 112–123, 124–135, 136–147, 148–159, 160–171, 172–183, 184–195, 196–207, 208–219, 220–231, 232–243, 244–255, 256–267, 268–279, 280–291, 292–303, 304–315, 316–327, 328–339, 340–351, 352–363, 364–375, 376–387, 388–399, 400–411, 412–423, 424–435, 436–447, 448–459, 460–471, 472–483, 484–495, 496–507, 508–519, 520–531, 532–543, 544–555, 556–567, 568–579, 580–591, 592–603, 604–615, 616–627, 628–639, 640–651, 652–663, 664–675, 676–687, 688–699, 700–711, 712–723, 724–735, 736–747, 748–759, 760–771, 772–783, 784–795, 796–807, 808–819, and 820–831. Residues 40–831 form a 66 X 12 AA tandem repeats of D-D-C-[ND]-I-T-G-D-G-N-E-T region; that stretch reads DDCNITGDCN…CNITGDCNET (792 aa). N67, N79, N91, and N103 each carry an N-linked (GlcNAc...) asparagine glycan. N-linked (GlcNAc...) asparagine glycans are attached at residues N127, N139, and N151. N-linked (GlcNAc...) asparagine glycosylation is present at N175. 6 N-linked (GlcNAc...) asparagine glycosylation sites follow: N199, N211, N223, N235, N247, and N259. 6 N-linked (GlcNAc...) asparagine glycosylation sites follow: N283, N295, N307, N319, N331, and N343. N-linked (GlcNAc...) asparagine glycosylation is found at N367, N379, N391, N403, and N415. N439 is a glycosylation site (N-linked (GlcNAc...) asparagine). 6 N-linked (GlcNAc...) asparagine glycosylation sites follow: N463, N475, N487, N499, N511, and N523. N547, N559, N571, N583, and N595 each carry an N-linked (GlcNAc...) asparagine glycan. The N-linked (GlcNAc...) asparagine glycan is linked to N619. 6 N-linked (GlcNAc...) asparagine glycosylation sites follow: N643, N655, N667, N679, N691, and N703. Residues N727, N739, N751, N763, and N775 are each glycosylated (N-linked (GlcNAc...) asparagine). An N-linked (GlcNAc...) asparagine glycan is attached at N799. N823 is a glycosylation site (N-linked (GlcNAc...) asparagine). The chain crosses the membrane as a helical span at residues 883–903; that stretch reads LLLAGSTFLVLAVGLSAVLFL. The Cytoplasmic portion of the chain corresponds to 904–945; the sequence is GRERQNAVVICDNEVMMEEVPGCLSDASFAVPVTQSSDEARP.

The protein resides in the flagellar pocket. It localises to the cell membrane. Its function is as follows. Supposed to function as cell surface receptor. Possibly involved in receptor-mediated endocytosis. The polypeptide is Cysteine-rich, acidic integral membrane protein (CRAM) (Trypanosoma brucei brucei).